The primary structure comprises 257 residues: 5'-nucleotidase SurE (257 aa).

A divalent metal cation-binding residues include Asp-13, Asp-14, Ser-44, and Asn-100.

It belongs to the SurE nucleotidase family. The cofactor is a divalent metal cation.

It localises to the cytoplasm. The catalysed reaction is a ribonucleoside 5'-phosphate + H2O = a ribonucleoside + phosphate. Functionally, nucleotidase that shows phosphatase activity on nucleoside 5'-monophosphates. The sequence is that of 5'-nucleotidase SurE from Phocaeicola vulgatus (strain ATCC 8482 / DSM 1447 / JCM 5826 / CCUG 4940 / NBRC 14291 / NCTC 11154) (Bacteroides vulgatus).